The sequence spans 360 residues: MSDNSFGKLFRVTTWGESHGPAIGCVIDGCPPRLKLSEEDIQPWLDRRRPGQSRFTTQRREPDQVRILSGVFEGQTTGTPISLMIENTDQRSKDYGDIATRYRPGHADIAYDMKYGIRDYRGGGRSSARETAMRVAAGAVARVLLRTLVGEGVKIRAALTGIGGQTIDPSRWDWDEVERNPLWCPDAESVGPWEALLDSIRKDGSSIGATVEVVAEGLPAGLGAPVYGKLDADLAGAMMGINGVKGVEIGDGFAVAALRGEQNADPIAPGPQFASNHAGGILGGISTGQPIVARFAIKPTSSILTPVPSITRDGESVEVMTKGRHDPCIGIRAVPVAEAMMACVLADHLLRDHAQCGWGR.

NADP(+) is bound by residues R48 and R54. Residues 125–127 (RSS), 242–243 (NG), G283, 298–302 (KPTSS), and R324 contribute to the FMN site.

It belongs to the chorismate synthase family. Homotetramer. FMNH2 is required as a cofactor.

It carries out the reaction 5-O-(1-carboxyvinyl)-3-phosphoshikimate = chorismate + phosphate. It functions in the pathway metabolic intermediate biosynthesis; chorismate biosynthesis; chorismate from D-erythrose 4-phosphate and phosphoenolpyruvate: step 7/7. In terms of biological role, catalyzes the anti-1,4-elimination of the C-3 phosphate and the C-6 proR hydrogen from 5-enolpyruvylshikimate-3-phosphate (EPSP) to yield chorismate, which is the branch point compound that serves as the starting substrate for the three terminal pathways of aromatic amino acid biosynthesis. This reaction introduces a second double bond into the aromatic ring system. This is Chorismate synthase from Gluconobacter oxydans (strain 621H) (Gluconobacter suboxydans).